The chain runs to 260 residues: Ribonuclease HII (260 aa).

An RNase H type-2 domain is found at 73-260 (LHIAGIDEAG…APVQQQLDIV (188 aa)). Positions 79, 80, and 171 each coordinate a divalent metal cation.

This sequence belongs to the RNase HII family. It depends on Mn(2+) as a cofactor. Mg(2+) serves as cofactor.

Its subcellular location is the cytoplasm. The catalysed reaction is Endonucleolytic cleavage to 5'-phosphomonoester.. Functionally, endonuclease that specifically degrades the RNA of RNA-DNA hybrids. The sequence is that of Ribonuclease HII from Desulfitobacterium hafniense (strain DSM 10664 / DCB-2).